The following is a 392-amino-acid chain: Iron-sulfur cluster assembly SufBD family protein ML0594 (392 aa).

It belongs to the iron-sulfur cluster assembly SufBD family.

This Mycobacterium leprae (strain TN) protein is Iron-sulfur cluster assembly SufBD family protein ML0594.